Consider the following 100-residue polypeptide: C-X-C motif chemokine 2 (100 aa).

An N-terminal signal peptide occupies residues 1–27; it reads MAPPTCRLLSAALVLLLLLATNHQATG. 2 cysteine pairs are disulfide-bonded: C36–C62 and C38–C78.

Belongs to the intercrine alpha (chemokine CxC) family. Homotetramer.

The protein resides in the secreted. Its function is as follows. Chemotactic for human polymorphonuclear leukocytes but does not induce chemokinesis or an oxidative burst. The polypeptide is C-X-C motif chemokine 2 (Cxcl2) (Mus musculus (Mouse)).